The sequence spans 766 residues: Phospholipid phosphatase-related protein type 4 (766 aa).

At Ser-37 the chain carries Phosphoserine. A run of 3 helical transmembrane segments spans residues 68–88 (LPCF…SLYF), 120–140 (AIPF…TIMV), and 179–199 (FVGV…IIQL). Residues Asn-215 and Asn-220 are each glycosylated (N-linked (GlcNAc...) asparagine). A helical membrane pass occupies residues 248-268 (SFPSQHATLAAFAAVYVSMYF). N-linked (GlcNAc...) asparagine glycosylation is present at Asn-269. A run of 2 helical transmembrane segments spans residues 277–297 (KLLK…CGLT) and 309–329 (VYCG…YAVG). Residue Ser-347 is modified to Phosphoserine. N-linked (GlcNAc...) asparagine glycosylation occurs at Asn-363. Ser-386 bears the Phosphoserine mark. N-linked (GlcNAc...) asparagine glycosylation is present at Asn-433. At Ser-439 the chain carries Phosphoserine. The tract at residues 454 to 494 (SKNESRKMSLQVMDTEPEGQSPPRSIEMRSSSEPSRVGVNG) is disordered. N-linked (GlcNAc...) asparagine glycosylation occurs at Asn-456. Ser-462 and Ser-474 each carry phosphoserine. 3 N-linked (GlcNAc...) asparagine glycosylation sites follow: Asn-515, Asn-545, and Asn-570. Ser-608 carries the post-translational modification Phosphoserine. Disordered regions lie at residues 634-654 (PIIQ…KWKA), 672-701 (DSES…HHHH), and 742-766 (ERSN…AYKD). Residues 672-697 (DSESCESLKDSFGSGDRKRSNIDSNE) show a composition bias toward basic and acidic residues. Over residues 743 to 752 (RSNSPENTRN) the composition is skewed to polar residues.

The protein belongs to the PA-phosphatase related phosphoesterase family. In terms of processing, O-glycosylated. Probably at Ser-347. As to expression, brain-specific, it is exclusively expressed in neurons (at protein level).

It is found in the postsynaptic density membrane. Functionally, postsynaptic density membrane protein that indirectly regulates glutamatergic synaptic transmission through lysophosphatidic acid (LPA)-mediated signaling pathways. Binds lysophosphatidic acid (LPA) and mediates its internalization into cells. Could act as receptor or a transporter of this lipid at the post-synaptic membrane. Modulates lysophosphatidic acid (LPA) activity in neuron axonal outgrowth during development by attenuating phospholipid-induced axon collapse. In Mus musculus (Mouse), this protein is Phospholipid phosphatase-related protein type 4.